The sequence spans 98 residues: NADH-ubiquinone oxidoreductase chain 4L (98 aa).

The next 3 helical transmembrane spans lie at 1-21 (MIPT…GMLT), 27-47 (VASL…TTLI), and 61-81 (IILL…LISI).

It belongs to the complex I subunit 4L family. Core subunit of respiratory chain NADH dehydrogenase (Complex I) which is composed of 45 different subunits.

The protein resides in the mitochondrion inner membrane. The catalysed reaction is a ubiquinone + NADH + 5 H(+)(in) = a ubiquinol + NAD(+) + 4 H(+)(out). Core subunit of the mitochondrial membrane respiratory chain NADH dehydrogenase (Complex I) which catalyzes electron transfer from NADH through the respiratory chain, using ubiquinone as an electron acceptor. Part of the enzyme membrane arm which is embedded in the lipid bilayer and involved in proton translocation. In Macaca nigra (Celebes black macaque), this protein is NADH-ubiquinone oxidoreductase chain 4L (MT-ND4L).